Reading from the N-terminus, the 84-residue chain is Large ribosomal subunit protein eL34 (84 aa).

This sequence belongs to the eukaryotic ribosomal protein eL34 family.

This chain is Large ribosomal subunit protein eL34, found in Pyrobaculum calidifontis (strain DSM 21063 / JCM 11548 / VA1).